A 517-amino-acid chain; its full sequence is Acetylcholine receptor subunit gamma (517 aa).

The signal sequence occupies residues 1–22 (MHGGQGPLLLLLLLAVCLGAQG). The Extracellular portion of the chain corresponds to 23–240 (RNQEERLLAD…VVFYLLIQRK (218 aa)). N52 and N163 each carry an N-linked (GlcNAc...) asparagine glycan. C150 and C164 are disulfide-bonded. Helical transmembrane passes span 241 to 265 (PLFY…IHFL), 275 to 293 (TVAI…LVAK), and 309 to 330 (LTFL…LNVS). The Cytoplasmic segment spans residues 331-474 (LRSPHTHSMA…WFLVGRVLDR (144 aa)). The chain crosses the membrane as a helical span at residues 475–495 (VCFLAMLSLFICGTAGIFLMA).

This sequence belongs to the ligand-gated ion channel (TC 1.A.9) family. Acetylcholine receptor (TC 1.A.9.1) subfamily. Gamma/CHRNG sub-subfamily. In terms of assembly, pentamer of two alpha chains, and one each of the beta, delta, and gamma (in immature muscle) or epsilon (in mature muscle) chains.

The protein resides in the postsynaptic cell membrane. Its subcellular location is the cell membrane. The enzyme catalyses K(+)(in) = K(+)(out). The catalysed reaction is Na(+)(in) = Na(+)(out). Functionally, after binding acetylcholine, the AChR responds by an extensive change in conformation that affects all subunits and leads to opening of an ion-conducting channel across the plasma membrane. This Homo sapiens (Human) protein is Acetylcholine receptor subunit gamma.